The following is a 1066-amino-acid chain: Hemoglobin and hemoglobin-haptoglobin-binding protein C (1066 aa).

A signal peptide spans 1-24 (MTNFKFTLLARSIAFALNASTAYA). 7 consecutive repeat copies span residues 26–29 (QPTN), 30–33 (QPTN), 34–37 (QPTN), 38–41 (QPTN), 42–45 (QPTN), 46–49 (QPTN), and 50–53 (QPTN). The 7 X 4 AA tandem repeats of Q-P-T-N stretch occupies residues 26–53 (QPTNQPTNQPTNQPTNQPTNQPTNQPTN). The span at 26–54 (QPTNQPTNQPTNQPTNQPTNQPTNQPTNQ) shows a compositional bias: low complexity. The disordered stretch occupies residues 26–57 (QPTNQPTNQPTNQPTNQPTNQPTNQPTNQDSN). The TonB box signature appears at 63–70 (EQINVSGS). The TBDR plug domain maps to 66 to 200 (NVSGSTETIN…LGGSVIFETK (135 aa)). Residues 208-1066 (DKDYYVSYKR…NYRMSVQFEF (859 aa)) enclose the TBDR beta-barrel domain. The TonB C-terminal box motif lies at 1049 to 1066 (NRLYAPGRNYRMSVQFEF).

The protein belongs to the TonB-dependent receptor family. Hemoglobin/haptoglobin binding protein subfamily.

The protein localises to the cell outer membrane. Its function is as follows. Acts as a receptor for hemoglobin or the hemoglobin/haptoglobin complex of the human host and is required for heme uptake. This is Hemoglobin and hemoglobin-haptoglobin-binding protein C (hgpC) from Haemophilus influenzae.